The following is a 480-amino-acid chain: Uridine 5'-monophosphate synthase (480 aa).

The residue at position 2 (Ala-2) is an N-acetylalanine. The interval 2–214 is OPRTase; the sequence is AAADALLGSL…AFVAANPNDS (213 aa). Tyr-37 carries the phosphotyrosine modification. Residue Ser-214 is modified to Phosphoserine. The segment at 215-220 is domain linker; the sequence is LPSVKK. The segment at 221 to 480 is OMPdecase; the sequence is EPKELSFGAR…WEAYLSRLAV (260 aa). Ser-257 provides a ligand contact to orotidine 5'-phosphate. UMP-binding positions include Ser-257, Asp-259, and 281-283; that span reads KIH. Orotidine 5'-phosphate contacts are provided by residues Lys-281, Lys-314, Asp-317, Thr-321, Ser-372, 430 to 432, and 450 to 451; these read QQY and GR. Residues Lys-314 and Asp-317 each act as for OMPdecase activity in the active site. UMP is bound by residues Asp-317, Thr-321, Ser-372, 430–432, and 450–451; these read QQY and GR.

In the N-terminal section; belongs to the purine/pyrimidine phosphoribosyltransferase family. The protein in the C-terminal section; belongs to the OMP decarboxylase family. In terms of assembly, homodimer; dimerization is required for enzymatic activity.

It catalyses the reaction orotidine 5'-phosphate + diphosphate = orotate + 5-phospho-alpha-D-ribose 1-diphosphate. The enzyme catalyses orotidine 5'-phosphate + H(+) = UMP + CO2. It participates in pyrimidine metabolism; UMP biosynthesis via de novo pathway; UMP from orotate: step 1/2. The protein operates within pyrimidine metabolism; UMP biosynthesis via de novo pathway; UMP from orotate: step 2/2. Bifunctional enzyme catalyzing the last two steps of de novo pyrimidine biosynthesis, orotate phosphoribosyltransferase (OPRT), which converts orotate to orotidine-5'-monophosphate (OMP), and orotidine-5'-monophosphate decarboxylase (ODC), the terminal enzymatic reaction that decarboxylates OMP to uridine monophosphate (UMP). This chain is Uridine 5'-monophosphate synthase (UMPS), found in Bos taurus (Bovine).